The following is a 182-amino-acid chain: CASP-like protein 5B1 (182 aa).

The interval G1 to D20 is disordered. Over G1–T41 the chain is Cytoplasmic. A helical membrane pass occupies residues V42–M62. The Extracellular segment spans residues V63–A73. N70 carries N-linked (GlcNAc...) asparagine glycosylation. A helical membrane pass occupies residues F74–I94. Residues D95 to S108 lie on the Cytoplasmic side of the membrane. The chain crosses the membrane as a helical span at residues I109 to A129. Topologically, residues C130–T159 are extracellular. Residues M160–V180 traverse the membrane as a helical segment. Residues S181 to E182 lie on the Cytoplasmic side of the membrane.

Belongs to the Casparian strip membrane proteins (CASP) family. Homodimer and heterodimers.

It localises to the cell membrane. This is CASP-like protein 5B1 from Picea sitchensis (Sitka spruce).